The following is a 115-amino-acid chain: Parathyroid hormone (115 aa).

A signal peptide spans 1–25; the sequence is MIPAKDMAKVMIVMLAICFLTKSDG. Positions 26-31 are excised as a propeptide; it reads KSVKKR. Positions 51 to 69 are important for receptor binding; sequence RVEWLRKKLQDVHNFVALG. Positions 73–115 are disordered; it reads APRDAGSQRPRKKEDNVLVESHEKSLGEADKADVNVLTKAKSQ. A compositionally biased stretch (basic and acidic residues) spans 84 to 105; that stretch reads KKEDNVLVESHEKSLGEADKAD.

This sequence belongs to the parathyroid hormone family. In terms of assembly, interacts with PTH1R (via N-terminal extracellular domain).

The protein resides in the secreted. In terms of biological role, parathyroid hormone elevates calcium level by dissolving the salts in bone and preventing their renal excretion. Acts by binding to its receptor, PTH1R, activating G protein-coupled receptor signaling. Stimulates [1-14C]-2-deoxy-D-glucose (2DG) transport and glycogen synthesis in osteoblastic cells. This Homo sapiens (Human) protein is Parathyroid hormone.